A 380-amino-acid polypeptide reads, in one-letter code: Chaperone protein DnaJ (380 aa).

Positions 6–71 constitute a J domain; sequence DYYESLEVSR…QKRAAYDRYG (66 aa). A CR-type zinc finger spans residues 136-215; it reads GVTKDVEVRT…CHGTGTEAKT (80 aa). The Zn(2+) site is built by Cys149, Cys152, Cys167, Cys170, Cys189, Cys192, Cys203, and Cys206. CXXCXGXG motif repeat units lie at residues 149–156, 167–174, 189–196, and 203–210; these read CEACHGSG, CPTCHGAG, CPTCHGSG, and CKVCHGTG.

The protein belongs to the DnaJ family. Homodimer. Zn(2+) serves as cofactor.

The protein localises to the cytoplasm. Participates actively in the response to hyperosmotic and heat shock by preventing the aggregation of stress-denatured proteins and by disaggregating proteins, also in an autonomous, DnaK-independent fashion. Unfolded proteins bind initially to DnaJ; upon interaction with the DnaJ-bound protein, DnaK hydrolyzes its bound ATP, resulting in the formation of a stable complex. GrpE releases ADP from DnaK; ATP binding to DnaK triggers the release of the substrate protein, thus completing the reaction cycle. Several rounds of ATP-dependent interactions between DnaJ, DnaK and GrpE are required for fully efficient folding. Also involved, together with DnaK and GrpE, in the DNA replication of plasmids through activation of initiation proteins. This is Chaperone protein DnaJ from Gluconobacter oxydans (strain 621H) (Gluconobacter suboxydans).